We begin with the raw amino-acid sequence, 323 residues long: DNA repair and recombination protein RadA (323 aa).

114–121 (GEFGSGKT) contacts ATP.

The protein belongs to the eukaryotic RecA-like protein family.

Functionally, involved in DNA repair and in homologous recombination. Binds and assemble on single-stranded DNA to form a nucleoprotein filament. Hydrolyzes ATP in a ssDNA-dependent manner and promotes DNA strand exchange between homologous DNA molecules. The sequence is that of DNA repair and recombination protein RadA from Picrophilus torridus (strain ATCC 700027 / DSM 9790 / JCM 10055 / NBRC 100828 / KAW 2/3).